The sequence spans 874 residues: Coatomer subunit gamma-1 (874 aa).

A compositionally biased stretch (basic and acidic residues) spans 1–11 (MLKKFDKKDEE). The segment at 1-21 (MLKKFDKKDEESGGGSNPFQH) is disordered. HEAT repeat units lie at residues 64–101 (TEAT…IAED), 283–320 (KELA…KHPS), 322–355 (VTAC…GSES), and 356–392 (SIDR…KYPR). Residue Thr594 is modified to Phosphothreonine. The interval 609–874 (RQEIFQEQLA…PVDIILASVG (266 aa)) is interaction with ZNF289/ARFGAP2.

It belongs to the COPG family. In terms of assembly, oligomeric complex that consists of at least the alpha, beta, beta', gamma, delta, epsilon and zeta subunits. Interacts with ZNF289/ARFGAP2 through its C-terminal appendage domain. Interacts with EGFR upon EGF treatment; interaction is essential for regulation of EGF-dependent nuclear transport of EGFR by retrograde trafficking from the Golgi to the ER. The coatomer interacts with KDEL receptors; the interaction is important for retrograde trafficking of KDEL-bearing proteins from the Golgi to the endoplasmic reticulum. Interacts with COPB1. Interacts with TMED10 (via C-terminus). Interacts with TMED2, TMED3, TMED7 and TMED9.

It is found in the cytoplasm. It localises to the golgi apparatus membrane. The protein localises to the cytoplasmic vesicle. The protein resides in the COPI-coated vesicle membrane. Its function is as follows. The coatomer is a cytosolic protein complex that binds to dilysine motifs and reversibly associates with Golgi non-clathrin-coated vesicles, which further mediate biosynthetic protein transport from the ER, via the Golgi up to the trans Golgi network. Coatomer complex is required for budding from Golgi membranes, and is essential for the retrograde Golgi-to-ER transport of dilysine-tagged proteins. In mammals, the coatomer can only be recruited by membranes associated to ADP-ribosylation factors (ARFs), which are small GTP-binding proteins; the complex also influences the Golgi structural integrity, as well as the processing, activity, and endocytic recycling of LDL receptors. Required for limiting lipid storage in lipid droplets. Involved in lipid homeostasis by regulating the presence of perilipin family members PLIN2 and PLIN3 at the lipid droplet surface and promoting the association of adipocyte triglyceride lipase (PNPLA2) with the lipid droplet surface to mediate lipolysis. The sequence is that of Coatomer subunit gamma-1 (COPG1) from Homo sapiens (Human).